The following is a 553-amino-acid chain: ATP synthase F(1) complex subunit alpha, mitochondrial (553 aa).

Residues 1-43 (MLSVRVAAAVARALPRRAGLVSKNALGSSFVGARNLHASNTRL) constitute a mitochondrion transit peptide. Phosphoserine occurs at positions 53 and 65. The residue at position 76 (Ser-76) is a Phosphoserine; alternate. Ser-76 is a glycosylation site (O-linked (GlcNAc) serine; alternate). Ser-106 is subject to Phosphoserine. 3 positions are modified to N6-acetyllysine: Lys-123, Lys-126, and Lys-132. Thr-134 carries the post-translational modification Phosphothreonine. An N6-acetyllysine; alternate modification is found at Lys-161. N6-succinyllysine; alternate is present on Lys-161. Ser-166 bears the Phosphoserine mark. Lys-167 is subject to N6-acetyllysine; alternate. Lys-167 bears the N6-succinyllysine; alternate mark. Residue Ser-184 is modified to Phosphoserine. Arg-204 is subject to Omega-N-methylarginine. ATP is bound by residues Gln-215, Gly-217, Lys-218, Thr-219, and Ser-220. Thr-219 contacts Mg(2+). An N6-acetyllysine; alternate mark is found at Lys-230 and Lys-239. Lys-230 and Lys-239 each carry N6-succinyllysine; alternate. Position 240 is an N6-acetyllysine (Lys-240). An N6-acetyllysine; alternate mark is found at Lys-261 and Lys-305. N6-succinyllysine; alternate is present on residues Lys-261 and Lys-305. Asp-312 serves as a coordination point for Mg(2+). Lys-427 carries the N6-acetyllysine; alternate modification. Lys-427 bears the N6-succinyllysine; alternate mark. Position 434 is an N6-acetyllysine (Lys-434). Positions 473 and 475 each coordinate ATP. 2 positions are modified to N6-acetyllysine; alternate: Lys-498 and Lys-506. N6-succinyllysine; alternate is present on residues Lys-498 and Lys-506. The residue at position 521 (Ser-521) is a Phosphoserine. Residues Lys-531 and Lys-539 each carry the N6-acetyllysine; alternate modification. Lys-531 and Lys-539 each carry N6-succinyllysine; alternate. Residue Lys-541 is modified to N6-acetyllysine.

The protein belongs to the ATPase alpha/beta chains family. In terms of assembly, homotrimer. Component of the ATP synthase complex composed at least of ATP5F1A/subunit alpha, ATP5F1B/subunit beta, ATP5MC1/subunit c (homooctomer), MT-ATP6/subunit a, MT-ATP8/subunit 8, ATP5ME/subunit e, ATP5MF/subunit f, ATP5MG/subunit g, ATP5MK/subunit k, ATP5MJ/subunit j, ATP5F1C/subunit gamma, ATP5F1D/subunit delta, ATP5F1E/subunit epsilon, ATP5PF/subunit F6, ATP5PB/subunit b, ATP5PD/subunit d, ATP5PO/subunit OSCP. ATP synthase complex consists of a soluble F(1) head domain (subunits alpha(3) and beta(3)) - the catalytic core - and a membrane F(0) domain - the membrane proton channel (subunits c, a, 8, e, f, g, k and j). These two domains are linked by a central stalk (subunits gamma, delta, and epsilon) rotating inside the F1 region and a stationary peripheral stalk (subunits F6, b, d, and OSCP). Interacts with ATPAF2. Interacts with HRG; the interaction occurs on the surface of T-cells and alters the cell morphology when associated with concanavalin (in vitro). Interacts with PLG (angiostatin peptide); the interaction inhibits most of the angiogenic properties of angiostatin. Interacts with BLOC1S1. Interacts with BCL2L1 isoform BCL-X(L); the interaction mediates the association of BCL2L1 isoform BCL-X(L) with the mitochondrial membrane F(1)F(0) ATP synthase and enhances neurons metabolic efficiency. Interacts with CLN5 and PPT1. Interacts with S100A1; this interaction increases F1-ATPase activity. Interacts with ABCB7; this interaction allows the regulation of cellular iron homeostasis and cellular reactive oxygen species (ROS) levels in cardiomyocytes. In terms of processing, acetylated on lysine residues. BLOC1S1 is required for acetylation. Acetylation of Lys-132, Lys-230 and Lys-498 is observed in liver mitochondria from fasted mice but not from fed mice.

The protein localises to the mitochondrion inner membrane. Its subcellular location is the cell membrane. Subunit alpha, of the mitochondrial membrane ATP synthase complex (F(1)F(0) ATP synthase or Complex V) that produces ATP from ADP in the presence of a proton gradient across the membrane which is generated by electron transport complexes of the respiratory chain. ATP synthase complex consist of a soluble F(1) head domain - the catalytic core - and a membrane F(1) domain - the membrane proton channel. These two domains are linked by a central stalk rotating inside the F(1) region and a stationary peripheral stalk. During catalysis, ATP synthesis in the catalytic domain of F(1) is coupled via a rotary mechanism of the central stalk subunits to proton translocation. In vivo, can only synthesize ATP although its ATP hydrolase activity can be activated artificially in vitro. With the catalytic subunit beta (ATP5F1B), forms the catalytic core in the F(1) domain. Subunit alpha does not bear the catalytic high-affinity ATP-binding sites. This chain is ATP synthase F(1) complex subunit alpha, mitochondrial, found in Mus musculus (Mouse).